The primary structure comprises 371 residues: DNA replication and repair protein RecF (371 aa).

ATP is bound at residue 30-37; that stretch reads GENAQGKT.

This sequence belongs to the RecF family.

It localises to the cytoplasm. In terms of biological role, the RecF protein is involved in DNA metabolism; it is required for DNA replication and normal SOS inducibility. RecF binds preferentially to single-stranded, linear DNA. It also seems to bind ATP. This chain is DNA replication and repair protein RecF, found in Staphylococcus haemolyticus (strain JCSC1435).